The following is a 291-amino-acid chain: N-acetylmannosamine kinase (291 aa).

Residues 5–12 (AIDIGGTK) and 132–139 (GVGGGVVS) contribute to the ATP site. Residues His-156, Cys-166, Cys-168, and Cys-173 each coordinate Zn(2+).

It belongs to the ROK (NagC/XylR) family. NanK subfamily. As to quaternary structure, homodimer.

The enzyme catalyses an N-acyl-D-mannosamine + ATP = an N-acyl-D-mannosamine 6-phosphate + ADP + H(+). It participates in amino-sugar metabolism; N-acetylneuraminate degradation; D-fructose 6-phosphate from N-acetylneuraminate: step 2/5. Its function is as follows. Catalyzes the phosphorylation of N-acetylmannosamine (ManNAc) to ManNAc-6-P. This Shigella boydii serotype 18 (strain CDC 3083-94 / BS512) protein is N-acetylmannosamine kinase.